A 132-amino-acid chain; its full sequence is Large-conductance mechanosensitive channel (132 aa).

3 helical membrane passes run 14 to 34 (VVDLAVGVVIGAAFGKIVSSL), 38 to 58 (IITPLLGMVLGGVNFTDLHFG), and 67 to 87 (GNFIQTIFDFLIIAASIFMFI).

Belongs to the MscL family. As to quaternary structure, homopentamer.

It localises to the cell membrane. In terms of biological role, channel that opens in response to stretch forces in the membrane lipid bilayer. May participate in the regulation of osmotic pressure changes within the cell. This is Large-conductance mechanosensitive channel from Bacillus cereus (strain G9842).